Consider the following 393-residue polypeptide: Beta-1,4-galactosyltransferase 3 (393 aa).

Residues 1 to 10 (MLRRLLERPC) are Cytoplasmic-facing. Residues 11–31 (TLALLVGSQLAVMMYLSLGGF) form a helical; Signal-anchor for type II membrane protein membrane-spanning segment. Residues 32–393 (RSLSALFGRD…ANHTALRGSH (362 aa)) lie on the Lumenal side of the membrane. The N-linked (GlcNAc...) asparagine glycan is linked to Asn57. Cys77 and Cys119 form a disulfide bridge. 130–134 (PHRAR) contacts UDP-alpha-D-galactose. N-linked (GlcNAc...) asparagine glycosylation is present at Asn166. Residues 169–171 (FNR), 196–197 (VD), Tyr226, and Trp258 contribute to the UDP-alpha-D-galactose site. Cys190 and Cys209 are oxidised to a cystine. A Mn(2+)-binding site is contributed by Asp197. 260–263 (GEDD) contacts N-acetyl-D-glucosamine. A Mn(2+)-binding site is contributed by His291. 291 to 293 (HRG) contributes to the UDP-alpha-D-galactose binding site. Arg303 contributes to the N-acetyl-D-glucosamine binding site. Residues Asn337 and Asn385 are each glycosylated (N-linked (GlcNAc...) asparagine). The interval 339–393 (TADIGTDPRGPRAPSGPRYPPGSSQAFRQEMLQRRPPARPGPPPTANHTALRGSH) is disordered.

It belongs to the glycosyltransferase 7 family. The cofactor is Mn(2+).

The protein resides in the golgi apparatus. It is found in the golgi stack membrane. It carries out the reaction an N-acetyl-beta-D-glucosaminyl derivative + UDP-alpha-D-galactose = a beta-D-galactosyl-(1-&gt;4)-N-acetyl-beta-D-glucosaminyl derivative + UDP + H(+). The enzyme catalyses N-acetyl-D-glucosamine + UDP-alpha-D-galactose = beta-D-galactosyl-(1-&gt;4)-N-acetyl-D-glucosamine + UDP + H(+). The catalysed reaction is a beta-D-GlcNAc-(1-&gt;3)-beta-D-Gal-(1-&gt;4)-beta-D-Glc-(1&lt;-&gt;1)-Cer(d18:1(4E)) + UDP-alpha-D-galactose = a neolactoside nLc4Cer(d18:1(4E)) + UDP + H(+). It catalyses the reaction a beta-D-glucosylceramide + UDP-alpha-D-galactose = a beta-D-galactosyl-(1-&gt;4)-beta-D-glucosyl-(1&lt;-&gt;1)-ceramide + UDP + H(+). It carries out the reaction a neolactoside IV(3)-beta-GlcNAc-nLc4Cer + UDP-alpha-D-galactose = a neolactoside nLc6Cer + UDP + H(+). Its pathway is protein modification; protein glycosylation. Responsible for the synthesis of complex-type N-linked oligosaccharides in many glycoproteins as well as the carbohydrate moieties of glycolipids. The chain is Beta-1,4-galactosyltransferase 3 (B4GALT3) from Pongo abelii (Sumatran orangutan).